The chain runs to 221 residues: Octanoyltransferase (221 aa).

A BPL/LPL catalytic domain is found at 40–218 (PNLEDVLILL…AFAEVFGLEL (179 aa)). Substrate-binding positions include 82-89 (RGGEVTYH), 149-151 (AIG), and 162-164 (GFA). Residue Cys-180 is the Acyl-thioester intermediate of the active site.

It belongs to the LipB family.

The protein localises to the cytoplasm. It carries out the reaction octanoyl-[ACP] + L-lysyl-[protein] = N(6)-octanoyl-L-lysyl-[protein] + holo-[ACP] + H(+). It functions in the pathway protein modification; protein lipoylation via endogenous pathway; protein N(6)-(lipoyl)lysine from octanoyl-[acyl-carrier-protein]: step 1/2. In terms of biological role, catalyzes the transfer of endogenously produced octanoic acid from octanoyl-acyl-carrier-protein onto the lipoyl domains of lipoate-dependent enzymes. Lipoyl-ACP can also act as a substrate although octanoyl-ACP is likely to be the physiological substrate. The chain is Octanoyltransferase from Nostoc sp. (strain PCC 7120 / SAG 25.82 / UTEX 2576).